The sequence spans 495 residues: Prenylcysteine oxidase 1-like (495 aa).

Residues 1–22 (MARAAPLLAVLATVLTTAAAGG) form the signal peptide. Residues Asn-185 and Asn-343 are each glycosylated (N-linked (GlcNAc...) asparagine).

This sequence belongs to the prenylcysteine oxidase family. FAD serves as cofactor.

It is found in the secreted. Likely to have oxidoreductase activity. Required in the mevalonate pathway to regulate prenylation and enhances the bactericidal activity of neutrophils. This chain is Prenylcysteine oxidase 1-like (Pcyox1l), found in Mus musculus (Mouse).